A 150-amino-acid polypeptide reads, in one-letter code: uncharacterized protein (150 aa).

The protein belongs to the Dps family.

This is an uncharacterized protein from Kitasatospora aureofaciens (Streptomyces aureofaciens).